We begin with the raw amino-acid sequence, 569 residues long: Hemin/hemoglobin-binding protein 2 (569 aa).

The first 28 residues, M1–A28, serve as a signal peptide directing secretion. NEAT domains follow at residues K34 to I173, L184 to A307, and L360 to I484. Residues S204–S205, Y280, and Y289 contribute to the heme site. A disordered region spans residues A307–K357. Polar residues predominate over residues T502–A511. The segment at T502–A537 is disordered. An NXZTN sorting signal motif is present at residues N536–N540. Residue T539 is modified to Pentaglycyl murein peptidoglycan amidated threonine. The propeptide at N540–S569 is removed by sortase B.

It is found in the cell surface. Its subcellular location is the secreted. The protein resides in the cell wall. With respect to regulation, is overexpressed in mecA, clpC and clpP mutants, suggesting the protein level is controlled by MecA, ClpC and ClpP (at protein level). Its function is as follows. Acts as an extracellular and cell wall-bound hemophore; scavenges host heme and hemoglobin from the environment and also serves as a cell wall receptor for both. At low hemin (Hn) and hemoglobin (Hb) concentrations adsorbs Hn/Hb and presumably directs it to membrane transporters. Soluble Hbp2 can probably pass Hn/Hb to cell wall-anchored Hbp2, and both forms can accept Hn/Hb from Hbp1. May be involved in crossing the digestive barrier in infected animals. Binds host hemin. Binds host hemoglobin with affinity in the nanomolar range. This Listeria monocytogenes serovar 1/2a (strain ATCC BAA-679 / EGD-e) protein is Hemin/hemoglobin-binding protein 2.